Here is a 4749-residue protein sequence, read N- to C-terminus: Dynein heavy chain domain-containing protein 1 (4749 aa).

Over residues 1-18 (MKPHSQTSPPSLPMPSTS) the composition is skewed to low complexity. 3 disordered regions span residues 1–27 (MKPH…TQKP), 275–308 (ESSD…KKSS), and 2690–2785 (ESLA…KLQS). Positions 2696-2716 (CEEEEVEEEKVPEVESEEEIA) are enriched in acidic residues. A compositionally biased stretch (polar residues) spans 2738–2749 (QATTGSFLSENS). Residues 3197–3224 (CQHQESLIENLVRQHDALKAQQEVFLEQ) adopt a coiled-coil conformation. The interval 3568–3667 (PPKQNRSLEP…SLPSCLTVLS (100 aa)) is disordered. Residues 3578-3593 (SPKESKEKFHVTKQDS) show a composition bias toward basic and acidic residues. Positions 3594 to 3636 (GDNTEDELEDENNEEEDEANEQRKEQKAEENKIQGENEQEVQE) form a coiled coil. A compositionally biased stretch (acidic residues) spans 3595–3612 (DNTEDELEDENNEEEDEA). A compositionally biased stretch (basic and acidic residues) spans 3613-3628 (NEQRKEQKAEENKIQG). Low complexity predominate over residues 3644 to 3655 (ESSGSHSSLPSE). Over residues 3656-3667 (TQSLPSCLTVLS) the composition is skewed to polar residues. Coiled-coil stretches lie at residues 3818–3838 (MVRT…LEDQ) and 4431–4451 (ERQL…LQAL).

The protein belongs to the dynein heavy chain family. In terms of tissue distribution, expressed in spermatozoa (at protein level).

It localises to the cell projection. The protein resides in the cilium. The protein localises to the flagellum. In terms of biological role, essential for the normal function of sperm flagella axonemes. The polypeptide is Dynein heavy chain domain-containing protein 1 (Dnhd1) (Mus musculus (Mouse)).